The primary structure comprises 175 residues: Tumor necrosis factor receptor superfamily member 13C (175 aa).

Residues Met1 to Ala71 are Extracellular-facing. One copy of the TNFR-Cys; truncated repeat lies at Gln21–Cys38. 2 disulfide bridges follow: Cys22–Cys35 and Cys27–Cys38. An N-linked (GlcNAc...) asparagine glycan is attached at Asn23. Residues Asp29–Asn34 are essential for TNFSF13B/TALL1/BAFF/BLyS binding. Residues Leu72 to Val92 traverse the membrane as a helical; Signal-anchor for type III membrane protein segment. Residues Ser93–Gln175 are Cytoplasmic-facing. The tract at residues Val124–Gln175 is disordered. Polar residues predominate over residues Leu160–Gln175.

Highly expressed in spleen and testis; detected at lower levels in lung and thymus.

The protein resides in the membrane. Functionally, B-cell receptor specific for TNFSF13B/TALL1/BAFF/BLyS. Promotes the survival of mature B-cells and the B-cell response. This is Tumor necrosis factor receptor superfamily member 13C (Tnfrsf13c) from Mus musculus (Mouse).